Consider the following 298-residue polypeptide: Porphobilinogen deaminase (298 aa).

Cys-239 is subject to S-(dipyrrolylmethanemethyl)cysteine.

It belongs to the HMBS family. As to quaternary structure, monomer. The cofactor is dipyrromethane.

The enzyme catalyses 4 porphobilinogen + H2O = hydroxymethylbilane + 4 NH4(+). The protein operates within porphyrin-containing compound metabolism; protoporphyrin-IX biosynthesis; coproporphyrinogen-III from 5-aminolevulinate: step 2/4. Tetrapolymerization of the monopyrrole PBG into the hydroxymethylbilane pre-uroporphyrinogen in several discrete steps. This is Porphobilinogen deaminase from Ehrlichia canis (strain Jake).